Reading from the N-terminus, the 337-residue chain is GTP 3',8-cyclase (337 aa).

In terms of domain architecture, Radical SAM core spans 17 to 242 (AFQRRYYYLR…QSKGLLDGPA (226 aa)). R26 is a GTP binding site. [4Fe-4S] cluster is bound by residues C33 and C37. Position 39 (Y39) interacts with S-adenosyl-L-methionine. C40 contributes to the [4Fe-4S] cluster binding site. GTP is bound at residue R76. An S-adenosyl-L-methionine-binding site is contributed by G80. T107 is a binding site for GTP. S131 lines the S-adenosyl-L-methionine pocket. Residue K168 coordinates GTP. M202 contacts S-adenosyl-L-methionine. The [4Fe-4S] cluster site is built by C265 and C268. A GTP-binding site is contributed by 270–272 (RLR). C282 is a [4Fe-4S] cluster binding site.

It belongs to the radical SAM superfamily. MoaA family. Monomer and homodimer. It depends on [4Fe-4S] cluster as a cofactor.

The catalysed reaction is GTP + AH2 + S-adenosyl-L-methionine = (8S)-3',8-cyclo-7,8-dihydroguanosine 5'-triphosphate + 5'-deoxyadenosine + L-methionine + A + H(+). Its pathway is cofactor biosynthesis; molybdopterin biosynthesis. In terms of biological role, catalyzes the cyclization of GTP to (8S)-3',8-cyclo-7,8-dihydroguanosine 5'-triphosphate. The sequence is that of GTP 3',8-cyclase from Pasteurella multocida (strain Pm70).